A 352-amino-acid chain; its full sequence is Ribosomal RNA large subunit methyltransferase M (352 aa).

S-adenosyl-L-methionine is bound by residues Ser184, 217-220 (APGG), Asp236, Asp256, and Asp272. The Proton acceptor role is filled by Lys301.

Belongs to the class I-like SAM-binding methyltransferase superfamily. RNA methyltransferase RlmE family. RlmM subfamily. Monomer.

It is found in the cytoplasm. The catalysed reaction is cytidine(2498) in 23S rRNA + S-adenosyl-L-methionine = 2'-O-methylcytidine(2498) in 23S rRNA + S-adenosyl-L-homocysteine + H(+). Its function is as follows. Catalyzes the 2'-O-methylation at nucleotide C2498 in 23S rRNA. This chain is Ribosomal RNA large subunit methyltransferase M, found in Pseudomonas paraeruginosa (strain DSM 24068 / PA7) (Pseudomonas aeruginosa (strain PA7)).